A 324-amino-acid polypeptide reads, in one-letter code: ATP-dependent 6-phosphofructokinase (324 aa).

Residue glycine 11 coordinates ATP. Position 21–25 (21–25 (RAVVR)) interacts with ADP. ATP contacts are provided by residues 72–73 (RE) and 102–105 (GNGS). Residue asparagine 103 coordinates Mg(2+). 126-128 (TID) provides a ligand contact to substrate. Aspartate 128 acts as the Proton acceptor in catalysis. Lysine 155 contributes to the ADP binding site. Substrate-binding positions include arginine 163 and 170-172 (MGR). ADP contacts are provided by residues 186 to 188 (GAE) and 214 to 216 (KNF). Residues glutamate 223, arginine 248, and 254 to 257 (YIQR) contribute to the substrate site.

This sequence belongs to the phosphofructokinase type A (PFKA) family. ATP-dependent PFK group I subfamily. Prokaryotic clade 'B1' sub-subfamily. As to quaternary structure, homotetramer. Mg(2+) is required as a cofactor.

The protein localises to the cytoplasm. It carries out the reaction beta-D-fructose 6-phosphate + ATP = beta-D-fructose 1,6-bisphosphate + ADP + H(+). It participates in carbohydrate degradation; glycolysis; D-glyceraldehyde 3-phosphate and glycerone phosphate from D-glucose: step 3/4. Its activity is regulated as follows. Allosterically activated by ADP and other diphosphonucleosides, and allosterically inhibited by phosphoenolpyruvate. In terms of biological role, catalyzes the phosphorylation of D-fructose 6-phosphate to fructose 1,6-bisphosphate by ATP, the first committing step of glycolysis. This chain is ATP-dependent 6-phosphofructokinase, found in Sulfurihydrogenibium sp. (strain YO3AOP1).